The following is a 132-amino-acid chain: S-protein homolog 15 (132 aa).

A signal peptide spans 1–20 (MSRLIFFILVTAIYFVGNEA).

Belongs to the plant self-incompatibility (S1) protein family.

The protein resides in the secreted. This chain is S-protein homolog 15, found in Arabidopsis thaliana (Mouse-ear cress).